Consider the following 92-residue polypeptide: Small ribosomal subunit protein uS19c (92 aa).

The protein belongs to the universal ribosomal protein uS19 family.

The protein localises to the plastid. It is found in the chloroplast. Protein S19 forms a complex with S13 that binds strongly to the 16S ribosomal RNA. This chain is Small ribosomal subunit protein uS19c, found in Cicer arietinum (Chickpea).